The primary structure comprises 290 residues: Beta carbonic anhydrase 6, mitochondrial (290 aa).

A mitochondrion-targeting transit peptide spans 1–20 (MAFTLGGRARRLVSATSVHQ). A Phosphoserine modification is found at Ser-122. Position 226 is an S-nitrosocysteine (Cys-226).

The protein belongs to the beta-class carbonic anhydrase family. Strongly expressed in aerial tissues including leaves, stems, flowers and siliques, and, to a lower extent, in roots. Accumulates in guard cells.

It localises to the mitochondrion. It carries out the reaction hydrogencarbonate + H(+) = CO2 + H2O. In terms of biological role, reversible hydration of carbon dioxide. The protein is Beta carbonic anhydrase 6, mitochondrial (BCA6) of Arabidopsis thaliana (Mouse-ear cress).